The sequence spans 128 residues: Small ribosomal subunit protein bS6 (128 aa).

Belongs to the bacterial ribosomal protein bS6 family.

Its function is as follows. Binds together with bS18 to 16S ribosomal RNA. The sequence is that of Small ribosomal subunit protein bS6 (rpsF) from Thermotoga maritima (strain ATCC 43589 / DSM 3109 / JCM 10099 / NBRC 100826 / MSB8).